Reading from the N-terminus, the 182-residue chain is Adenine phosphoribosyltransferase (182 aa).

The protein belongs to the purine/pyrimidine phosphoribosyltransferase family. In terms of assembly, homodimer.

It is found in the cytoplasm. The enzyme catalyses AMP + diphosphate = 5-phospho-alpha-D-ribose 1-diphosphate + adenine. The protein operates within purine metabolism; AMP biosynthesis via salvage pathway; AMP from adenine: step 1/1. Its function is as follows. Catalyzes a salvage reaction resulting in the formation of AMP, that is energically less costly than de novo synthesis. This Streptomyces coelicolor (strain ATCC BAA-471 / A3(2) / M145) protein is Adenine phosphoribosyltransferase.